The sequence spans 258 residues: Imidazole glycerol phosphate synthase subunit HisF (258 aa).

Active-site residues include aspartate 11 and aspartate 130.

It belongs to the HisA/HisF family. Heterodimer of HisH and HisF.

It is found in the cytoplasm. It carries out the reaction 5-[(5-phospho-1-deoxy-D-ribulos-1-ylimino)methylamino]-1-(5-phospho-beta-D-ribosyl)imidazole-4-carboxamide + L-glutamine = D-erythro-1-(imidazol-4-yl)glycerol 3-phosphate + 5-amino-1-(5-phospho-beta-D-ribosyl)imidazole-4-carboxamide + L-glutamate + H(+). The protein operates within amino-acid biosynthesis; L-histidine biosynthesis; L-histidine from 5-phospho-alpha-D-ribose 1-diphosphate: step 5/9. Functionally, IGPS catalyzes the conversion of PRFAR and glutamine to IGP, AICAR and glutamate. The HisF subunit catalyzes the cyclization activity that produces IGP and AICAR from PRFAR using the ammonia provided by the HisH subunit. This chain is Imidazole glycerol phosphate synthase subunit HisF, found in Magnetococcus marinus (strain ATCC BAA-1437 / JCM 17883 / MC-1).